The chain runs to 40 residues: Alpha-conotoxin-like Qc1.1c (40 aa).

The propeptide occupies 1–19 (SDGRNTAANDKASNLMALR). Intrachain disulfides connect Cys-22–Cys-28 and Cys-23–Cys-36. Positions 24 to 26 (PNP) are lacks the Ser-Xaa-Pro motif that is crucial for potent interaction with nAChR.

Belongs to the conotoxin A superfamily. Expressed by the venom duct.

It is found in the secreted. Alpha-conotoxins act on postsynaptic membranes, they bind to the nicotinic acetylcholine receptors (nAChR) and thus inhibit them. Has possibly a distinct nAChR binding mode from other alpha-conotoxins, due to a different three residue motif (lacks the Ser-Xaa-Pro motif). This chain is Alpha-conotoxin-like Qc1.1c, found in Conus quercinus (Oak cone).